The following is a 91-amino-acid chain: RNA-binding protein Hfq (91 aa).

Residues 9–68 (DPYLNALRRERIPVSIYLVNGIKLQGQIESFDQFVILLKNTVNQMVYKHAISTVVPARSV) enclose the Sm domain. The segment at 68 to 91 (VSHHNNNHHTTPTEAVENVETQAE) is disordered.

Belongs to the Hfq family. In terms of assembly, homohexamer.

Functionally, RNA chaperone that binds small regulatory RNA (sRNAs) and mRNAs to facilitate mRNA translational regulation in response to envelope stress, environmental stress and changes in metabolite concentrations. Also binds with high specificity to tRNAs. The sequence is that of RNA-binding protein Hfq from Haemophilus influenzae (strain 86-028NP).